The chain runs to 648 residues: MNILGFFQRLGRALQLPIAVLPVAALLLRFGQPDLLNVAFIAQAGGAIFDNLALIFAIGVASSWSKDSAGAAALAGAVGYFVLTKAMVTINPEINMGVLAGIITGLVGGAAYNRWSDIKLPDFLSFFGGKRFVPIATGFFCLVLAAIFGYVWPPVQHAIHAGGEWIVSAGALGSGIFGFINRLLIPTGLHQVLNTIAWFQIGEFTNAAGTVFHGDINRFYAGDGTAGMFMSGFFPIMMFGLPGAALAMYFAAPKERRPMVGGMLLSVAVTAFLTGVTEPLEFLFMFLAPLLYLLHALLTGISLFVATLLGIHAGFSFSAGAIDYALMYNLPAASQNVWMLLVMGVIFFAIYFVVFSLVIRMFNLKTPGREDKEDEIVTEEANSNTEEGLTQLATNYIAAVGGTDNLKAIDACITRLRLTVADSARVNDTMCKRLGASGVVKLNKQTIQVIVGAKAESIGDAMKKVVARGPVAAASAEATPATAAPVAKPQAVPNAVSIAELVSPITGDVVALDQVPDEAFASKAVGDGVAVKPTDKIVVSPAAGTIVKIFNTNHAFCLETEKGAEIVVHMGIDTVALEGKGFKRLVEEGAQVSAGQPILEMDLDYLNANARSMISPVVCSNIDDFSGLIIKAQGHIVAGQTPLYEIKK.

An N-formylmethionine modification is found at methionine 1. The PTS EIIC type-1 domain occupies 1–371; that stretch reads MNILGFFQRL…FNLKTPGRED (371 aa). The next 12 membrane-spanning stretches (helical) occupy residues 16 to 36, 38 to 58, 70 to 90, 92 to 112, 132 to 152, 159 to 179, 192 to 212, 232 to 252, 260 to 280, 282 to 302, 303 to 323, and 339 to 359; these read LPIAVLPVAALLLRFGQPDLL, VAFIAQAGGAIFDNLALIFAI, GAAALAGAVGYFVLTKAMVTI, PEINMGVLAGIITGLVGGAAY, FVPIATGFFCLVLAAIFGYVW, IHAGGEWIVSAGALGSGIFGF, VLNTIAWFQIGEFTNAAGTVF, GFFPIMMFGLPGAALAMYFAA, VGGMLLSVAVTAFLTGVTEPL, FLFMFLAPLLYLLHALLTGIS, LFVATLLGIHAGFSFSAGAID, and MLLVMGVIFFAIYFVVFSLVI. One can recognise a PTS EIIB type-1 domain in the interval 390 to 472; that stretch reads TQLATNYIAA…KKVVARGPVA (83 aa). Cysteine 412 functions as the Phosphocysteine intermediate; for EIIB activity in the catalytic mechanism. Phosphocysteine; by EIIA is present on cysteine 412. A PTS EIIA type-1 domain is found at 517–621; sequence DEAFASKAVG…SMISPVVCSN (105 aa). Histidine 554 and histidine 569 together coordinate Zn(2+). Histidine 569 functions as the Tele-phosphohistidine intermediate; for EIIA activity in the catalytic mechanism. Position 569 is a phosphohistidine; by HPr (histidine 569).

Zn(2+) is required as a cofactor. Post-translationally, 60% of isolated protein was N-formylated.

The protein resides in the cell inner membrane. The catalysed reaction is N(pros)-phospho-L-histidyl-[protein] + N-acetyl-D-glucosamine(out) = N-acetyl-D-glucosamine 6-phosphate(in) + L-histidyl-[protein]. Its activity is regulated as follows. P-chloromercuribenzoate inhibits the accumulation of both N-acetyl-D-glucosamine and antibiotic streptozotocin (2-deoxy-2-(3-methyl-3-nitrosoureido)-D-glucopyranose). N-acetyl-D-glucosamine is a competitive inhibitor for the uptake of streptozotocin. In terms of biological role, the phosphoenolpyruvate-dependent sugar phosphotransferase system (sugar PTS), a major carbohydrate active transport system, catalyzes the phosphorylation of incoming sugar substrates concomitantly with their translocation across the cell membrane. This system is involved in N-acetylglucosamine transport. It can also transport and phosphorylate the antibiotic streptozotocin. Could play a significant role in the recycling of peptidoglycan. The chain is PTS system N-acetylglucosamine-specific EIICBA component from Escherichia coli (strain K12).